The sequence spans 158 residues: Putative 4-hydroxy-4-methyl-2-oxoglutarate aldolase (158 aa).

Substrate contacts are provided by residues 75–78 and R97; that span reads GDLI. D98 serves as a coordination point for a divalent metal cation.

The protein belongs to the class II aldolase/RraA-like family. In terms of assembly, homotrimer. A divalent metal cation is required as a cofactor.

It catalyses the reaction 4-hydroxy-4-methyl-2-oxoglutarate = 2 pyruvate. The enzyme catalyses oxaloacetate + H(+) = pyruvate + CO2. Its function is as follows. Catalyzes the aldol cleavage of 4-hydroxy-4-methyl-2-oxoglutarate (HMG) into 2 molecules of pyruvate. Also contains a secondary oxaloacetate (OAA) decarboxylase activity due to the common pyruvate enolate transition state formed following C-C bond cleavage in the retro-aldol and decarboxylation reactions. The sequence is that of Putative 4-hydroxy-4-methyl-2-oxoglutarate aldolase from Saccharopolyspora erythraea (strain ATCC 11635 / DSM 40517 / JCM 4748 / NBRC 13426 / NCIMB 8594 / NRRL 2338).